We begin with the raw amino-acid sequence, 501 residues long: Mitogen-activated protein kinase MKC1 (501 aa).

The 312-residue stretch at 28-339 (FKIVKELGHG…VRDALNHKYL (312 aa)) folds into the Protein kinase domain. Residues 34-42 (LGHGAYGIV) and Lys74 contribute to the ATP site. Asp174 functions as the Proton acceptor in the catalytic mechanism. Thr211 is modified (phosphothreonine). The short motif at 211–213 (TEY) is the TXY element. Tyr213 is modified (phosphotyrosine). Residues 400–450 (MQKREEQRQEEEEKELLEQQRQFPAQESMDISQTPYNNLETNIGTPQVEDD) are disordered. Positions 422 to 444 (FPAQESMDISQTPYNNLETNIGT) are enriched in polar residues.

Belongs to the protein kinase superfamily. CMGC Ser/Thr protein kinase family. MAP kinase subfamily. Requires Mg(2+) as cofactor. Dually phosphorylated on Thr-211 and Tyr-213, which activates the enzyme.

It catalyses the reaction L-seryl-[protein] + ATP = O-phospho-L-seryl-[protein] + ADP + H(+). The enzyme catalyses L-threonyl-[protein] + ATP = O-phospho-L-threonyl-[protein] + ADP + H(+). Its activity is regulated as follows. Activated by tyrosine and threonine phosphorylation. This chain is Mitogen-activated protein kinase MKC1 (MKC1), found in Candida albicans (Yeast).